The primary structure comprises 471 residues: Trigger factor (471 aa).

A PPIase FKBP-type domain is found at 169-264 (GDVAVVDFKG…LKEIKEKELP (96 aa)). Residues 443 to 471 (SLASQESEITAPETEAETIEVTAESTTGE) form a disordered region. Residues 448 to 471 (ESEITAPETEAETIEVTAESTTGE) show a composition bias toward low complexity.

Belongs to the FKBP-type PPIase family. Tig subfamily.

The protein localises to the cytoplasm. It carries out the reaction [protein]-peptidylproline (omega=180) = [protein]-peptidylproline (omega=0). Involved in protein export. Acts as a chaperone by maintaining the newly synthesized protein in an open conformation. Functions as a peptidyl-prolyl cis-trans isomerase. The sequence is that of Trigger factor from Trichormus variabilis (strain ATCC 29413 / PCC 7937) (Anabaena variabilis).